We begin with the raw amino-acid sequence, 272 residues long: Ribonuclease HII (272 aa).

The 186-residue stretch at 87–272 (KYVAGVDEVG…HRMSFLKNIL (186 aa)) folds into the RNase H type-2 domain. Asp93, Glu94, and Asp188 together coordinate a divalent metal cation.

Belongs to the RNase HII family. Mn(2+) is required as a cofactor. It depends on Mg(2+) as a cofactor.

Its subcellular location is the cytoplasm. The catalysed reaction is Endonucleolytic cleavage to 5'-phosphomonoester.. Functionally, endonuclease that specifically degrades the RNA of RNA-DNA hybrids. The polypeptide is Ribonuclease HII (Clostridium perfringens (strain ATCC 13124 / DSM 756 / JCM 1290 / NCIMB 6125 / NCTC 8237 / Type A)).